A 359-amino-acid chain; its full sequence is MMKRETLIEAGIIGGLAGAQVIYAGNSELLSQLLSLGIDPLLIVILCTFASVLLITPLAFLLERKLWPRSLSFKLKIKLVLVALAGVTLFQGLFLEGMKHTSASMATAMPNLCPAFIFVIAWAAGMEKVKLSCMYSRVKMGGTVLCVMGALIMSLMHSTTATLSSVKTIPIVPDEVVVDKDKILGCLYLLLAICGLSSSIVLQASILAEFPAPISMFSMVSLMGGITTVALQYALKGSMEMGSASVIGLGHLVGYAILGGLVSGGGLSFNAWVIKRKGPVIVSLFSPIATVVCVVVSAFTMEESFNLGSFAGMALMFGGLYFVLWAKGKEDCEEIDEMKQDDEESLLRTEFDLQKPLLL.

Helical transmembrane passes span 5–25 (ETLI…IYAG), 41–61 (LLIV…LAFL), 77–97 (IKLV…FLEG), 105–125 (MATA…WAAG), 143–163 (TVLC…TATL), 183–203 (ILGC…IVLQ), 206–226 (ILAE…MGGI), 246–266 (VIGL…SGGG), 279–299 (PVIV…VSAF), and 305–325 (FNLG…FVLW). One can recognise an EamA 1 domain in the interval 30–154 (LSQLLSLGID…LCVMGALIMS (125 aa)). Positions 206-324 (ILAEFPAPIS…LMFGGLYFVL (119 aa)) constitute an EamA 2 domain.

This sequence belongs to the drug/metabolite transporter (DMT) superfamily. Plant drug/metabolite exporter (P-DME) (TC 2.A.7.4) family.

The protein resides in the membrane. The sequence is that of WAT1-related protein At4g16620 from Arabidopsis thaliana (Mouse-ear cress).